Consider the following 162-residue polypeptide: Large ribosomal subunit protein bL17 (162 aa).

A disordered region spans residues 118–162 (RAPAAAPEAEEKGEKKAAGKAEKAPKAAKAPKAEKKPAKKAAKAE). Positions 126–162 (AEEKGEKKAAGKAEKAPKAAKAPKAEKKPAKKAAKAE) are enriched in basic and acidic residues.

This sequence belongs to the bacterial ribosomal protein bL17 family. Part of the 50S ribosomal subunit. Contacts protein L32.

This Anaeromyxobacter dehalogenans (strain 2CP-C) protein is Large ribosomal subunit protein bL17.